A 58-amino-acid chain; its full sequence is ATP synthase F(0) complex subunit k, mitochondrial (58 aa).

2 positions are modified to N6-acetyllysine: Lys16 and Lys17. The chain crosses the membrane as a helical span at residues 23–45 (TLTGRMNCVLATYGSIALIVLYF).

As to quaternary structure, component of the ATP synthase complex composed at least of ATP5F1A/subunit alpha, ATP5F1B/subunit beta, ATP5MC1/subunit c (homooctomer), MT-ATP6/subunit a, MT-ATP8/subunit 8, ATP5ME/subunit e, ATP5MF/subunit f, ATP5MG/subunit g, ATP5MK/subunit k, ATP5MJ/subunit j, ATP5F1C/subunit gamma, ATP5F1D/subunit delta, ATP5F1E/subunit epsilon, ATP5PF/subunit F6, ATP5PB/subunit b, ATP5PD/subunit d, ATP5PO/subunit OSCP. ATP synthase complex consists of a soluble F(1) head domain (subunits alpha(3) and beta(3)) - the catalytic core - and a membrane F(0) domain - the membrane proton channel (subunits c, a, 8, e, f, g, k and j). These two domains are linked by a central stalk (subunits gamma, delta, and epsilon) rotating inside the F1 region and a stationary peripheral stalk (subunits F6, b, d, and OSCP). The ATP synthase complex/complex V exists as a monomeric and a dimeric supercomplex that helps shape mitochondrial cristae to optimize proton flow.

It is found in the mitochondrion membrane. Subunit k, of the mitochondrial membrane ATP synthase complex (F(1)F(0) ATP synthase or Complex V) that produces ATP from ADP in the presence of a proton gradient across the membrane which is generated by electron transport complexes of the respiratory chain. ATP synthase complex consist of a soluble F(1) head domain - the catalytic core - and a membrane F(1) domain - the membrane proton channel. These two domains are linked by a central stalk rotating inside the F(1) region and a stationary peripheral stalk. During catalysis, ATP synthesis in the catalytic domain of F(1) is coupled via a rotary mechanism of the central stalk subunits to proton translocation. In vivo, can only synthesize ATP although its ATP hydrolase activity can be activated artificially in vitro. Part of the complex F(0) domain. Required for dimerization of the ATP synthase complex and as such regulates ATP synthesis in the mitochondria. The polypeptide is ATP synthase F(0) complex subunit k, mitochondrial (Homo sapiens (Human)).